The sequence spans 200 residues: dITP/XTP pyrophosphatase (200 aa).

7-12 (TSNKHK) serves as a coordination point for substrate. Residues Glu38 and Asp73 each contribute to the Mg(2+) site. Catalysis depends on Asp73, which acts as the Proton acceptor. Substrate-binding positions include Ser74, 154–157 (FGYD), Lys177, and 182–183 (HR).

Belongs to the HAM1 NTPase family. As to quaternary structure, homodimer. Mg(2+) serves as cofactor.

The enzyme catalyses XTP + H2O = XMP + diphosphate + H(+). It catalyses the reaction dITP + H2O = dIMP + diphosphate + H(+). It carries out the reaction ITP + H2O = IMP + diphosphate + H(+). Functionally, pyrophosphatase that catalyzes the hydrolysis of nucleoside triphosphates to their monophosphate derivatives, with a high preference for the non-canonical purine nucleotides XTP (xanthosine triphosphate), dITP (deoxyinosine triphosphate) and ITP. Seems to function as a house-cleaning enzyme that removes non-canonical purine nucleotides from the nucleotide pool, thus preventing their incorporation into DNA/RNA and avoiding chromosomal lesions. In Campylobacter jejuni subsp. doylei (strain ATCC BAA-1458 / RM4099 / 269.97), this protein is dITP/XTP pyrophosphatase.